The following is a 132-amino-acid chain: MTMTDPIADMLTRLRNASAAKHETVDMPYSKFKANIAEILKREGYIKDFTAKEAKVGQTLEVTLKYGPNGERSIQGIKRISKPGLRRYAKSDSLPMPLGGLGIAIISTSSGLLTQKECLDRGIGGEIVAFVW.

It belongs to the universal ribosomal protein uS8 family. Part of the 30S ribosomal subunit. Contacts proteins S5 and S12.

Functionally, one of the primary rRNA binding proteins, it binds directly to 16S rRNA central domain where it helps coordinate assembly of the platform of the 30S subunit. The sequence is that of Small ribosomal subunit protein uS8 from Bifidobacterium longum (strain NCC 2705).